We begin with the raw amino-acid sequence, 322 residues long: Methionyl-tRNA formyltransferase (322 aa).

Position 112–115 (112–115 (SLLP)) interacts with (6S)-5,6,7,8-tetrahydrofolate.

The protein belongs to the Fmt family.

The enzyme catalyses L-methionyl-tRNA(fMet) + (6R)-10-formyltetrahydrofolate = N-formyl-L-methionyl-tRNA(fMet) + (6S)-5,6,7,8-tetrahydrofolate + H(+). Its function is as follows. Attaches a formyl group to the free amino group of methionyl-tRNA(fMet). The formyl group appears to play a dual role in the initiator identity of N-formylmethionyl-tRNA by promoting its recognition by IF2 and preventing the misappropriation of this tRNA by the elongation apparatus. In Synechococcus sp. (strain JA-3-3Ab) (Cyanobacteria bacterium Yellowstone A-Prime), this protein is Methionyl-tRNA formyltransferase.